The sequence spans 317 residues: MDAYELVTRNTAEIVTEDELRALLNKPTKRVYTGYEPSGEIHLGHLVTINKLMDMKAAGFDVVVLIANLHAYLNRKGTFEQIKELADYNKACIEAVGLKGAEFVLGTDVQLTPKYQTEVLTLCQQITLNRATRSMDEVGRAMDNPMVSQMVYPVMQVVDIPTLNVDAAVGGIDQRKIHMLAREHLPTLGYKPPVCIHTPIVNGLDGEKMSSSKGNVVSVADSPEEIKKKMKKAFCPPETEGNPILQIFRYNVFPRMDTIAIRRPEKFGGDLEFHSYAELEAAYAGGKIHPMDLKAACGDALTELLADAYAYVQSYKN.

Tyr32 serves as a coordination point for L-tyrosine. The 'HIGH' region motif lies at 37–45 (PSGEIHLGH). Positions 152, 156, 159, and 174 each coordinate L-tyrosine. A 'KMSKS' region motif is present at residues 208-212 (KMSSS). Ser211 is a binding site for ATP.

It belongs to the class-I aminoacyl-tRNA synthetase family. TyrS type 3 subfamily. Homodimer.

It is found in the cytoplasm. It carries out the reaction tRNA(Tyr) + L-tyrosine + ATP = L-tyrosyl-tRNA(Tyr) + AMP + diphosphate + H(+). Functionally, catalyzes the attachment of tyrosine to tRNA(Tyr) in a two-step reaction: tyrosine is first activated by ATP to form Tyr-AMP and then transferred to the acceptor end of tRNA(Tyr). The sequence is that of Tyrosine--tRNA ligase from Methanocorpusculum labreanum (strain ATCC 43576 / DSM 4855 / Z).